The primary structure comprises 144 residues: uncharacterized protein (144 aa).

Residues 23–82 are a coiled coil; the sequence is EELYKKLENNLRKIETSYLDSKHCQDFKRKIEYYKIVPLISETKEIIKVLIQKIETLEIK.

This is an uncharacterized protein from Acanthamoeba polyphaga mimivirus (APMV).